The chain runs to 130 residues: Lysozyme C (130 aa).

The C-type lysozyme domain maps to Lys1–Leu130. Intrachain disulfides connect Cys6–Cys128, Cys30–Cys116, Cys65–Cys81, and Cys77–Cys95. Catalysis depends on residues Glu35 and Asp53.

The protein belongs to the glycosyl hydrolase 22 family. As to quaternary structure, monomer.

The protein localises to the secreted. The catalysed reaction is Hydrolysis of (1-&gt;4)-beta-linkages between N-acetylmuramic acid and N-acetyl-D-glucosamine residues in a peptidoglycan and between N-acetyl-D-glucosamine residues in chitodextrins.. Functionally, lysozymes have primarily a bacteriolytic function; those in tissues and body fluids are associated with the monocyte-macrophage system and enhance the activity of immunoagents. In Chelonia mydas (Green sea-turtle), this protein is Lysozyme C (LYZ).